The chain runs to 405 residues: Replication factor C large subunit (405 aa).

Residue 47-54 (GPPGVGKT) participates in ATP binding.

Belongs to the activator 1 small subunits family. RfcL subfamily. In terms of assembly, heteromultimer composed of small subunits (RfcS) and large subunits (RfcL).

Its function is as follows. Part of the RFC clamp loader complex which loads the PCNA sliding clamp onto DNA. The protein is Replication factor C large subunit of Saccharolobus islandicus (strain M.16.27) (Sulfolobus islandicus).